The primary structure comprises 265 residues: Imidazole glycerol phosphate synthase subunit HisF (265 aa).

Catalysis depends on residues Asp12 and Asp131.

The protein belongs to the HisA/HisF family. Heterodimer of HisH and HisF.

The protein resides in the cytoplasm. The catalysed reaction is 5-[(5-phospho-1-deoxy-D-ribulos-1-ylimino)methylamino]-1-(5-phospho-beta-D-ribosyl)imidazole-4-carboxamide + L-glutamine = D-erythro-1-(imidazol-4-yl)glycerol 3-phosphate + 5-amino-1-(5-phospho-beta-D-ribosyl)imidazole-4-carboxamide + L-glutamate + H(+). It functions in the pathway amino-acid biosynthesis; L-histidine biosynthesis; L-histidine from 5-phospho-alpha-D-ribose 1-diphosphate: step 5/9. Functionally, IGPS catalyzes the conversion of PRFAR and glutamine to IGP, AICAR and glutamate. The HisF subunit catalyzes the cyclization activity that produces IGP and AICAR from PRFAR using the ammonia provided by the HisH subunit. The polypeptide is Imidazole glycerol phosphate synthase subunit HisF (Alkalilimnicola ehrlichii (strain ATCC BAA-1101 / DSM 17681 / MLHE-1)).